Here is a 429-residue protein sequence, read N- to C-terminus: 5-methylthioadenosine/S-adenosylhomocysteine deaminase (429 aa).

Zn(2+)-binding residues include His-66 and His-68. Substrate is bound by residues Glu-95, Arg-147, Arg-158, and His-181. His-208 is a Zn(2+) binding site. Positions 211 and 296 each coordinate substrate. Zn(2+) is bound at residue Asp-296.

It belongs to the metallo-dependent hydrolases superfamily. MTA/SAH deaminase family. The cofactor is Zn(2+).

It catalyses the reaction S-adenosyl-L-homocysteine + H2O + H(+) = S-inosyl-L-homocysteine + NH4(+). It carries out the reaction S-methyl-5'-thioadenosine + H2O + H(+) = S-methyl-5'-thioinosine + NH4(+). Catalyzes the deamination of 5-methylthioadenosine and S-adenosyl-L-homocysteine into 5-methylthioinosine and S-inosyl-L-homocysteine, respectively. Is also able to deaminate adenosine. This Caldicellulosiruptor saccharolyticus (strain ATCC 43494 / DSM 8903 / Tp8T 6331) protein is 5-methylthioadenosine/S-adenosylhomocysteine deaminase.